Reading from the N-terminus, the 643-residue chain is DNA gyrase subunit B (643 aa).

The region spanning 428–542 is the Toprim domain; the sequence is SEIFLVEGDS…AGYVYIAQPP (115 aa). 3 residues coordinate Mg(2+): E434, D507, and D509.

It belongs to the type II topoisomerase GyrB family. As to quaternary structure, heterotetramer, composed of two GyrA and two GyrB chains. In the heterotetramer, GyrA contains the active site tyrosine that forms a transient covalent intermediate with DNA, while GyrB binds cofactors and catalyzes ATP hydrolysis. It depends on Mg(2+) as a cofactor. Mn(2+) is required as a cofactor. The cofactor is Ca(2+).

It is found in the cytoplasm. The catalysed reaction is ATP-dependent breakage, passage and rejoining of double-stranded DNA.. A type II topoisomerase that negatively supercoils closed circular double-stranded (ds) DNA in an ATP-dependent manner to modulate DNA topology and maintain chromosomes in an underwound state. Negative supercoiling favors strand separation, and DNA replication, transcription, recombination and repair, all of which involve strand separation. Also able to catalyze the interconversion of other topological isomers of dsDNA rings, including catenanes and knotted rings. Type II topoisomerases break and join 2 DNA strands simultaneously in an ATP-dependent manner. This Staphylococcus epidermidis (strain ATCC 35984 / DSM 28319 / BCRC 17069 / CCUG 31568 / BM 3577 / RP62A) protein is DNA gyrase subunit B.